The following is a 148-amino-acid chain: Large ribosomal subunit protein bL9 (148 aa).

The protein belongs to the bacterial ribosomal protein bL9 family.

Its function is as follows. Binds to the 23S rRNA. This chain is Large ribosomal subunit protein bL9, found in Streptomyces griseus subsp. griseus (strain JCM 4626 / CBS 651.72 / NBRC 13350 / KCC S-0626 / ISP 5235).